A 562-amino-acid polypeptide reads, in one-letter code: Urease subunit alpha (562 aa).

In terms of domain architecture, Urease spans 131 to 562 (GGMDCHIHFI…LPMAQRYFLF (432 aa)). The Ni(2+) site is built by His-136, His-138, and Lys-219. Lys-219 is modified (N6-carboxylysine). His-221 is a substrate binding site. Residues His-248 and His-274 each coordinate Ni(2+). Catalysis depends on His-322, which acts as the Proton donor. Position 362 (Asp-362) interacts with Ni(2+).

The protein belongs to the metallo-dependent hydrolases superfamily. Urease alpha subunit family. Heterotrimer of UreA (gamma), UreB (beta) and UreC (alpha) subunits. Three heterotrimers associate to form the active enzyme. The cofactor is Ni cation. Post-translationally, carboxylation allows a single lysine to coordinate two nickel ions.

The protein resides in the cytoplasm. The catalysed reaction is urea + 2 H2O + H(+) = hydrogencarbonate + 2 NH4(+). The protein operates within nitrogen metabolism; urea degradation; CO(2) and NH(3) from urea (urease route): step 1/1. In Paracoccus denitrificans (strain Pd 1222), this protein is Urease subunit alpha.